Consider the following 288-residue polypeptide: NAD kinase (288 aa).

Asp70 acts as the Proton acceptor in catalysis. Residues 70 to 71 (DG), 144 to 145 (ND), Arg155, Lys172, Asp174, 185 to 190 (TGYSLS), and Gln245 contribute to the NAD(+) site.

It belongs to the NAD kinase family. A divalent metal cation is required as a cofactor.

The protein localises to the cytoplasm. It catalyses the reaction NAD(+) + ATP = ADP + NADP(+) + H(+). In terms of biological role, involved in the regulation of the intracellular balance of NAD and NADP, and is a key enzyme in the biosynthesis of NADP. Catalyzes specifically the phosphorylation on 2'-hydroxyl of the adenosine moiety of NAD to yield NADP. In Geobacter sp. (strain M21), this protein is NAD kinase.